The primary structure comprises 336 residues: Acetyl-coenzyme A carboxylase carboxyl transferase subunit beta (336 aa).

One can recognise a CoA carboxyltransferase N-terminal domain in the interval 27 to 297 (LWTKCESCQG…VAPAPAPAAT (271 aa)). Residues Cys-31, Cys-34, Cys-50, and Cys-53 each coordinate Zn(2+). A C4-type zinc finger spans residues 31–53 (CESCQGILYRPDLERNLEVCPKC). Residues 287–336 (SVAPAPAPAATVDPEPESAEPEAPAEEAGPAGAAGDQAGESQDEGDPRNA) form a disordered region. The span at 300-311 (PEPESAEPEAPA) shows a compositional bias: acidic residues. Positions 312–326 (EEAGPAGAAGDQAGE) are enriched in low complexity.

The protein belongs to the AccD/PCCB family. Acetyl-CoA carboxylase is a heterohexamer composed of biotin carboxyl carrier protein (AccB), biotin carboxylase (AccC) and two subunits each of ACCase subunit alpha (AccA) and ACCase subunit beta (AccD). Requires Zn(2+) as cofactor.

It is found in the cytoplasm. The enzyme catalyses N(6)-carboxybiotinyl-L-lysyl-[protein] + acetyl-CoA = N(6)-biotinyl-L-lysyl-[protein] + malonyl-CoA. It participates in lipid metabolism; malonyl-CoA biosynthesis; malonyl-CoA from acetyl-CoA: step 1/1. Its function is as follows. Component of the acetyl coenzyme A carboxylase (ACC) complex. Biotin carboxylase (BC) catalyzes the carboxylation of biotin on its carrier protein (BCCP) and then the CO(2) group is transferred by the transcarboxylase to acetyl-CoA to form malonyl-CoA. The protein is Acetyl-coenzyme A carboxylase carboxyl transferase subunit beta of Halorhodospira halophila (strain DSM 244 / SL1) (Ectothiorhodospira halophila (strain DSM 244 / SL1)).